A 241-amino-acid chain; its full sequence is Uridylate kinase (241 aa).

ATP-binding positions include 15–18, glycine 58, and arginine 62; that span reads KLSG. Residues aspartate 77 and 138-145 each bind UMP; that span reads TGNPYFTT. 3 residues coordinate ATP: threonine 165, tyrosine 171, and aspartate 174.

It belongs to the UMP kinase family. As to quaternary structure, homohexamer.

The protein resides in the cytoplasm. The catalysed reaction is UMP + ATP = UDP + ADP. It functions in the pathway pyrimidine metabolism; CTP biosynthesis via de novo pathway; UDP from UMP (UMPK route): step 1/1. Inhibited by UTP. Functionally, catalyzes the reversible phosphorylation of UMP to UDP. In Desulfotalea psychrophila (strain LSv54 / DSM 12343), this protein is Uridylate kinase.